An 87-amino-acid polypeptide reads, in one-letter code: Acyl-CoA-binding protein (87 aa).

Ser2 is modified (N-acetylserine). An ACB domain is found at 2 to 87; it reads SQAEFDKAAE…VEDLKKKYGI (86 aa). Position 8 is an N6-acetyllysine; alternate (Lys8). An N6-succinyllysine; alternate modification is found at Lys8. An acyl-CoA is bound at residue Lys14. Residue Lys17 is modified to N6-succinyllysine. An N6-acetyllysine modification is found at Lys19. Position 29 is a phosphotyrosine (Tyr29). An acyl-CoA-binding positions include 29–33, Lys55, and Tyr74; that span reads YSHYK. N6-acetyllysine; alternate is present on Lys55. At Lys55 the chain carries N6-succinyllysine; alternate. Lys55 carries the post-translational modification N6-(2-hydroxyisobutyryl)lysine; alternate. Residue Lys55 is modified to N6-malonyllysine; alternate. Lys77 is modified (N6-acetyllysine; alternate). N6-succinyllysine; alternate is present on Lys77.

Belongs to the ACBP family. As to quaternary structure, monomer.

It is found in the endoplasmic reticulum. It localises to the golgi apparatus. In terms of biological role, binds medium- and long-chain acyl-CoA esters with very high affinity and may function as an intracellular carrier of acyl-CoA esters. The sequence is that of Acyl-CoA-binding protein (DBI) from Canis lupus familiaris (Dog).